Consider the following 664-residue polypeptide: MSSRKHLANAIRALSMDGVQQANSGHPGAPMGMADIAEVLWRSHLNHNPQNPEWADRDRFILSNGHGSMLIYSLLHLSGYDLSIEDLKNFRQLHSKTPGHPEYGYAPGVETTTGPLGQGITNGVGMAMAEKALAAQFNREGHDIVDHNTYVFMGDGCLMEGISHEACSLAGTLGLGKLIAFWDDNGISIDGEVEGWFSDDTPKRFEAYGWHVIPAVDGHDSDAINAAIEAAKADPRPSLICTKTVIGFGSPNKQGTHDCHGAPLGAEEIAATKAQLGWEYGAFDIPADVYAGWDAKEVGAEKEAAWNAKFDAYAAAHPELAAEYKRRVNGDLPAEWEEKANTIIADLQANPANIASRKASQNALEAFGAMLPEFMGGSADLAPSNLTMWSGSKSLEANDFSGNYIHYGVREFGMTAIMNGIALHGGFVPYGATFLMFMEYARNAMRMAALMKVQNIQVYTHDSIGLGEDGPTHQPVEQIASLRLTPNMSTWRPCDQVESAVAWKLAIERKDGPSSLIFSRQNLAQQERTQEQVADIAKGAYILKDCEGQPELILIATGSEVELAVEAAAQLTAEGKAVRVVSMPSTDAFDKQDEGYREAVFPSAVTKRIAIEAGIADFWYKYVGFGGKIIGMTTFGESAPADELFKMFGFTTENVVNTAKELLA.

Residue histidine 26 participates in substrate binding. Thiamine diphosphate is bound by residues histidine 66 and 114–116 (GPL). Aspartate 155 provides a ligand contact to Mg(2+). Positions 156 and 185 each coordinate thiamine diphosphate. Positions 185 and 187 each coordinate Mg(2+). Positions 260, 357, and 384 each coordinate substrate. Histidine 260 contributes to the thiamine diphosphate binding site. Residue glutamate 411 is the Proton donor of the active site. Phenylalanine 437 provides a ligand contact to thiamine diphosphate. The substrate site is built by histidine 461, aspartate 469, and arginine 520.

The protein belongs to the transketolase family. In terms of assembly, homodimer. Mg(2+) serves as cofactor. It depends on Ca(2+) as a cofactor. Mn(2+) is required as a cofactor. The cofactor is Co(2+). Requires thiamine diphosphate as cofactor.

The enzyme catalyses D-sedoheptulose 7-phosphate + D-glyceraldehyde 3-phosphate = aldehydo-D-ribose 5-phosphate + D-xylulose 5-phosphate. Functionally, catalyzes the transfer of a two-carbon ketol group from a ketose donor to an aldose acceptor, via a covalent intermediate with the cofactor thiamine pyrophosphate. This chain is Transketolase 1 (tkt1), found in Aliivibrio fischeri (strain ATCC 700601 / ES114) (Vibrio fischeri).